We begin with the raw amino-acid sequence, 184 residues long: Nucleoside triphosphate pyrophosphatase (184 aa).

Aspartate 66 acts as the Proton acceptor in catalysis.

It belongs to the Maf family. A divalent metal cation is required as a cofactor.

The protein resides in the cytoplasm. It catalyses the reaction a ribonucleoside 5'-triphosphate + H2O = a ribonucleoside 5'-phosphate + diphosphate + H(+). The enzyme catalyses a 2'-deoxyribonucleoside 5'-triphosphate + H2O = a 2'-deoxyribonucleoside 5'-phosphate + diphosphate + H(+). Functionally, nucleoside triphosphate pyrophosphatase. May have a dual role in cell division arrest and in preventing the incorporation of modified nucleotides into cellular nucleic acids. The polypeptide is Nucleoside triphosphate pyrophosphatase (Prochlorococcus marinus (strain MIT 9313)).